We begin with the raw amino-acid sequence, 364 residues long: Gap junction delta-4 protein (364 aa).

Over 1–19 the chain is Cytoplasmic; sequence MEKLNLLGFLIITLNCNVT. The helical transmembrane segment at 20–40 threads the bilayer; the sequence is IMGMIWLIVEVLLRMLVVVLA. The Extracellular portion of the chain corresponds to 41 to 76; that stretch reads GSPIYEDEQERFICNTLQPGCANVCYDLFSPVSPLR. A helical transmembrane segment spans residues 77–97; sequence FWLVQSLALLLPSVVFGTYTL. Residues 98 to 128 lie on the Cytoplasmic side of the membrane; the sequence is HRGAKLAAVGGACRPQVPDLSTAYLVHLLLR. Residues 129–149 traverse the membrane as a helical segment; it reads MLLEAGLAFLHYFLFGFSVPA. The Extracellular portion of the chain corresponds to 150–173; it reads RVSCSHVPCSGAVDCYVSRPTEKS. A helical transmembrane segment spans residues 174-194; it reads LLILFFWAVSALSFLLSLADL. The Cytoplasmic segment spans residues 195–364; it reads LWILPRRKTL…HLRTKKSEWV (170 aa). Over residues 331–340 the composition is skewed to polar residues; it reads HLARHSSASK. Positions 331-364 are disordered; the sequence is HLARHSSASKPQAPCRLTTSGSAPHLRTKKSEWV.

The protein belongs to the connexin family. Delta-type subfamily. As to quaternary structure, a connexon is composed of a hexamer of connexins.

Its subcellular location is the cell membrane. It is found in the cell junction. The protein resides in the gap junction. One gap junction consists of a cluster of closely packed pairs of transmembrane channels, the connexons, through which materials of low MW diffuse from one cell to a neighboring cell. This is Gap junction delta-4 protein (Gjd4) from Mus musculus (Mouse).